The sequence spans 392 residues: 8-amino-7-oxononanoate synthase (392 aa).

Arg-19 serves as a coordination point for substrate. 106–107 contributes to the pyridoxal 5'-phosphate binding site; it reads GY. Residue His-131 participates in substrate binding. Pyridoxal 5'-phosphate is bound by residues Ser-176, His-204, and Thr-233. Residue Lys-236 is modified to N6-(pyridoxal phosphate)lysine. Thr-350 serves as a coordination point for substrate.

Belongs to the class-II pyridoxal-phosphate-dependent aminotransferase family. BioF subfamily. As to quaternary structure, homodimer. It depends on pyridoxal 5'-phosphate as a cofactor.

The enzyme catalyses 6-carboxyhexanoyl-[ACP] + L-alanine + H(+) = (8S)-8-amino-7-oxononanoate + holo-[ACP] + CO2. Its pathway is cofactor biosynthesis; biotin biosynthesis. In terms of biological role, catalyzes the decarboxylative condensation of pimeloyl-[acyl-carrier protein] and L-alanine to produce 8-amino-7-oxononanoate (AON), [acyl-carrier protein], and carbon dioxide. This chain is 8-amino-7-oxononanoate synthase, found in Pseudomonas fluorescens (strain ATCC BAA-477 / NRRL B-23932 / Pf-5).